The following is a 204-amino-acid chain: Uracil-DNA glycosylase (204 aa).

Residue Asp-47 is the Proton acceptor of the active site.

It belongs to the uracil-DNA glycosylase (UDG) superfamily. UNG family.

The protein localises to the host nucleus. It catalyses the reaction Hydrolyzes single-stranded DNA or mismatched double-stranded DNA and polynucleotides, releasing free uracil.. Excises uracil residues from the DNA which can arise as a result of misincorporation of dUMP residues by DNA polymerase or deamination of cytosines. Therefore may reduce deleterious uracil incorporation into the viral genome, particularly in terminally differentiated cells which lack DNA repair enzymes. The polypeptide is Uracil-DNA glycosylase (UL2) (Bos taurus (Bovine)).